The chain runs to 358 residues: MRKINFSAGPSTLPLEILEQAQKEFCDYQGKGYSIMEISHRTKVFEEVHFGAQEKAKKLYGLNDDYEVLFLQGGASLQFAMIPMNLALNGVCEYVNTGVWTKKAIKEAQILGVNVKIVVSSEESNFDHIPRVEFSDNADYAYICSNNTIYGTQYQNYPKTKAPLIVDASSDFFSRKVDFSNIALFYGGVQKNAGISGLSCIFIRKDMLERSKNKQIPSMLNYLTHAENQSLFNTPPTFAIYMFNLEMDWLLNQGGLDKVHEKNSQKATMLYKCIDLSDGFYKGHADKKDRSLMNVSFNIAKNKDLEPLFVKEAEEAGMIGLKGHRILGGIRASIYNALNLDQVKILCEFMKEFQGKYA.

Residue R41 coordinates L-glutamate. Residues 75 to 76 (AS), W100, T148, D167, and Q190 contribute to the pyridoxal 5'-phosphate site. The residue at position 191 (K191) is an N6-(pyridoxal phosphate)lysine. 233-234 (NT) serves as a coordination point for pyridoxal 5'-phosphate.

Belongs to the class-V pyridoxal-phosphate-dependent aminotransferase family. SerC subfamily. In terms of assembly, homodimer. Pyridoxal 5'-phosphate is required as a cofactor.

It is found in the cytoplasm. It catalyses the reaction O-phospho-L-serine + 2-oxoglutarate = 3-phosphooxypyruvate + L-glutamate. It carries out the reaction 4-(phosphooxy)-L-threonine + 2-oxoglutarate = (R)-3-hydroxy-2-oxo-4-phosphooxybutanoate + L-glutamate. Its pathway is amino-acid biosynthesis; L-serine biosynthesis; L-serine from 3-phospho-D-glycerate: step 2/3. It participates in cofactor biosynthesis; pyridoxine 5'-phosphate biosynthesis; pyridoxine 5'-phosphate from D-erythrose 4-phosphate: step 3/5. Catalyzes the reversible conversion of 3-phosphohydroxypyruvate to phosphoserine and of 3-hydroxy-2-oxo-4-phosphonooxybutanoate to phosphohydroxythreonine. The polypeptide is Phosphoserine aminotransferase (Campylobacter jejuni subsp. doylei (strain ATCC BAA-1458 / RM4099 / 269.97)).